The chain runs to 180 residues: Inner membrane-spanning protein YciB (180 aa).

Transmembrane regions (helical) follow at residues 4 to 24, 25 to 45, 52 to 72, 76 to 96, 118 to 138, and 150 to 170; these read LLSE…GGGI, QHAT…CYVI, LSII…ISGN, IKIK…MSGI, ITLS…NEVV, and FKVF…LPLL.

The protein belongs to the YciB family.

It is found in the cell inner membrane. Functionally, plays a role in cell envelope biogenesis, maintenance of cell envelope integrity and membrane homeostasis. This Rickettsia massiliae (strain Mtu5) protein is Inner membrane-spanning protein YciB.